Consider the following 287-residue polypeptide: Large ribosomal subunit protein uL2 (287 aa).

The interval 221–287 is disordered; the sequence is RGSVMNPCDH…SKRSRGGRDS (67 aa). The segment covering 271-287 has biased composition (basic residues); it reads LRKRRKTSKRSRGGRDS.

It belongs to the universal ribosomal protein uL2 family. Part of the 50S ribosomal subunit. Forms a bridge to the 30S subunit in the 70S ribosome.

Its function is as follows. One of the primary rRNA binding proteins. Required for association of the 30S and 50S subunits to form the 70S ribosome, for tRNA binding and peptide bond formation. It has been suggested to have peptidyltransferase activity; this is somewhat controversial. Makes several contacts with the 16S rRNA in the 70S ribosome. This Synechococcus sp. (strain CC9902) protein is Large ribosomal subunit protein uL2.